The sequence spans 205 residues: MQRGKFITIDGVEGSGKSTQIDFICDYLVTKKINVILTREPGGTELGEKIRTLLLSTDIQSIHGDTELLLLFAARNEHIRTKIIPSLEKGDWVLSDRFTDASYAYQGGGRGLSIERITQLEKWVLQDFTPDVTLLLDVSVALGMSRVESRGRKDRIELETNDFFKRVRNSYIERSKQFPKRIKLIDASKTLEQTAQQIKIILQVL.

ATP is bound at residue 11–18 (GVEGSGKS).

It belongs to the thymidylate kinase family.

The catalysed reaction is dTMP + ATP = dTDP + ADP. Functionally, phosphorylation of dTMP to form dTDP in both de novo and salvage pathways of dTTP synthesis. This is Thymidylate kinase from Ruthia magnifica subsp. Calyptogena magnifica.